Here is a 141-residue protein sequence, read N- to C-terminus: N,N-dimethylformamidase alpha subunit (141 aa).

In terms of assembly, heterotetramer of two DmfA1 (alpha) and two DmfA2 (beta) subunits.

The catalysed reaction is N,N-dimethylformamide + H2O = dimethylamine + formate. In terms of biological role, hydrolyzes N,N-dimethylformamide, and to a lesser extent N,N-dimethylacetamide and N,N-diethylacetamide. Has no activity against the substituted amides N-methylformamide, N-ethylformamide, N-ethylformamide and N-methylacetamide or the unsubstituted amides formamide, nicotinamide, acetoamide, benzamide, acetamide and acrylamide. In Paracoccus aminophilus, this protein is N,N-dimethylformamidase alpha subunit.